Consider the following 396-residue polypeptide: Enoyl-[acyl-carrier-protein] reductase [NADH] (396 aa).

Residues Gly47–Phe52, Phe73–Glu74, Asp110–Ala111, and Leu138–Ala139 contribute to the NAD(+) site. Tyr224 serves as a coordination point for substrate. Catalysis depends on Tyr234, which acts as the Proton donor. NAD(+)-binding positions include Lys243 and Leu272–Thr274.

This sequence belongs to the TER reductase family. Monomer.

The catalysed reaction is a 2,3-saturated acyl-[ACP] + NAD(+) = a (2E)-enoyl-[ACP] + NADH + H(+). It functions in the pathway lipid metabolism; fatty acid biosynthesis. Its function is as follows. Involved in the final reduction of the elongation cycle of fatty acid synthesis (FAS II). Catalyzes the reduction of a carbon-carbon double bond in an enoyl moiety that is covalently linked to an acyl carrier protein (ACP). The sequence is that of Enoyl-[acyl-carrier-protein] reductase [NADH] from Cytophaga hutchinsonii (strain ATCC 33406 / DSM 1761 / CIP 103989 / NBRC 15051 / NCIMB 9469 / D465).